Reading from the N-terminus, the 294-residue chain is MHPRFQTAFGELPATLQSALQSYIDAPDFPAMLKAEQVDAITQRCGLDDDALAFALLPLAAACSLAPISQFYVGAIARGQSGNLYFGANMEFSGAPMQQTIHAEQCAVTHAWLRGEPALASITVNYTPCGHCRQFMNELNSGVSLKIRLPGREPATLGDYLPDSFGPKDLDITTLLMDQVDHGFQLALTDELEKAALAAANQSHAPYSNAHSGVALEAEDGTVYTGRYAENAAFNPSLPPLQAALILMNVSGDDCQKVKRAVLAEPESAILTQWDATRATLAALGCQNVSRITF.

2 consecutive CMP/dCMP-type deaminase domains span residues 48–168 and 187–294; these read DDDA…FGPK and ALTD…RITF. 89–91 is a binding site for substrate; it reads NME. Residue His102 coordinates Zn(2+). Glu104 (proton donor) is an active-site residue. Zn(2+) is bound by residues Cys129 and Cys132.

It belongs to the cytidine and deoxycytidylate deaminase family. Homodimer. Requires Zn(2+) as cofactor.

The enzyme catalyses cytidine + H2O + H(+) = uridine + NH4(+). The catalysed reaction is 2'-deoxycytidine + H2O + H(+) = 2'-deoxyuridine + NH4(+). Its function is as follows. This enzyme scavenges exogenous and endogenous cytidine and 2'-deoxycytidine for UMP synthesis. The chain is Cytidine deaminase from Serratia proteamaculans (strain 568).